Reading from the N-terminus, the 199-residue chain is Holliday junction branch migration complex subunit RuvA (199 aa).

Positions 1–64 (MIGRITGILL…EDGHFLYGFA (64 aa)) are domain I. Positions 65–143 (SADERAAFRQ…RALPGFGAST (79 aa)) are domain II. A flexible linker region spans residues 144–152 (VPGAAAQPA). Positions 152-199 (ADSRSDILNALLALGYSDKEAQSALKAIPPETGVSDGIRQALKLLSKA) are domain III.

The protein belongs to the RuvA family. Homotetramer. Forms an RuvA(8)-RuvB(12)-Holliday junction (HJ) complex. HJ DNA is sandwiched between 2 RuvA tetramers; dsDNA enters through RuvA and exits via RuvB. An RuvB hexamer assembles on each DNA strand where it exits the tetramer. Each RuvB hexamer is contacted by two RuvA subunits (via domain III) on 2 adjacent RuvB subunits; this complex drives branch migration. In the full resolvosome a probable DNA-RuvA(4)-RuvB(12)-RuvC(2) complex forms which resolves the HJ.

It localises to the cytoplasm. The RuvA-RuvB-RuvC complex processes Holliday junction (HJ) DNA during genetic recombination and DNA repair, while the RuvA-RuvB complex plays an important role in the rescue of blocked DNA replication forks via replication fork reversal (RFR). RuvA specifically binds to HJ cruciform DNA, conferring on it an open structure. The RuvB hexamer acts as an ATP-dependent pump, pulling dsDNA into and through the RuvAB complex. HJ branch migration allows RuvC to scan DNA until it finds its consensus sequence, where it cleaves and resolves the cruciform DNA. In Aromatoleum aromaticum (strain DSM 19018 / LMG 30748 / EbN1) (Azoarcus sp. (strain EbN1)), this protein is Holliday junction branch migration complex subunit RuvA.